Consider the following 441-residue polypeptide: Serum response factor-binding protein 1 (441 aa).

Coiled coils occupy residues 52–77 and 118–140; these read KGTEDALLKNQRRAQRLLEEIHAMKE and LLKKKIDVLKDAVQAFKDARQSA. Disordered stretches follow at residues 137-342, 357-389, and 406-441; these read RQSA…RNDK, FHSLAGPKSSRRDPREQAPKNKAPDFPENEPPV, and QTMQAPLHPSWEASRRRKEQQSKIAVFQGKKITFDD. Positions 139–152 are enriched in low complexity; it reads SAPAAESSESTSGE. Residues 153-183 show a composition bias toward basic and acidic residues; sequence GRCKDIARSKDDARESQHPERTVVREQKAKD. Lysine 201 is covalently cross-linked (Glycyl lysine isopeptide (Lys-Gly) (interchain with G-Cter in SUMO2)). Phosphoserine is present on serine 214. The span at 237–246 shows a compositional bias: polar residues; that stretch reads DSNQGKASTK. A compositionally biased stretch (basic and acidic residues) spans 269–282; that stretch reads EKEYFDDSTEERFY. Phosphoserine is present on residues serine 276, serine 291, and serine 293. A compositionally biased stretch (basic and acidic residues) spans 308–321; that stretch reads KESGVHSSAKELKP. Lysine 328 participates in a covalent cross-link: Glycyl lysine isopeptide (Lys-Gly) (interchain with G-Cter in SUMO2). A compositionally biased stretch (basic and acidic residues) spans 366–381; that stretch reads SRRDPREQAPKNKAPD.

As to quaternary structure, interacts with SRF. Forms complexes with SRF and SRF cofactors ARID2, MYOCD and NKX2-5. Interacts with the N-terminus of SLC2A4. As to expression, highly expressed in heart, skeletal muscle, liver, kidney, testis and brain. Also expressed in white adipose tissue. Expression is up-regulated in cardiomyopathic heart.

The protein resides in the cytoplasm. The protein localises to the perinuclear region. In terms of biological role, may be involved in regulating transcriptional activation of cardiac genes during the aging process. May play a role in biosynthesis and/or processing of SLC2A4 in adipose cells. The sequence is that of Serum response factor-binding protein 1 from Mus musculus (Mouse).